The primary structure comprises 196 residues: CASP-like protein 2A2 (196 aa).

Residues 1–26 lie on the Cytoplasmic side of the membrane; sequence MAQGKESVSVVEMEGSGNGPAVEMRH. A helical transmembrane segment spans residues 27–47; the sequence is FETLFRLLPVGLCISALVLML. Residues 48 to 68 are Extracellular-facing; that stretch reads KSEQSDQYMQLDYSNVDAFRC. A helical transmembrane segment spans residues 69–89; that stretch reads LAYANGICAGYSLISAFDSMV. Topologically, residues 90–98 are cytoplasmic; that stretch reads PVSHHISRS. The chain crosses the membrane as a helical span at residues 99 to 119; that stretch reads WILFLLDQGITYLMLAGGAVA. At 120 to 148 the chain is on the extracellular side; sequence TQVLYVAYKGDEKATWEQICGSYGRFCNR. The chain crosses the membrane as a helical span at residues 149–169; the sequence is AGASVIISFFALVCFLLLSLL. Residues 170–196 lie on the Cytoplasmic side of the membrane; that stretch reads SAYRLFSKYDPPIHGGAKLEDQTTAQI.

It belongs to the Casparian strip membrane proteins (CASP) family. As to quaternary structure, homodimer and heterodimers.

The protein resides in the cell membrane. The chain is CASP-like protein 2A2 from Picea sitchensis (Sitka spruce).